A 475-amino-acid polypeptide reads, in one-letter code: MNNAIAQQIAEQGGVEAYLHAQQHKSLLRFLTCGSVDDGKSTLIGRLLHDTRQIYEDQLSTLHTDSKRLGTQGDKLDLALLVDGLQAEREQGITIDVAYRYFSTEKRKFIIADTPGHEQYTRNMATGASTCDVAILLIDVRKGVLDQTRLHSFISTLLGIRHLVVAVNKMDLVAFDEQIFQGIRQDYLRFAEQLPVDLDITFVPLSALEGDNVAALGKAMPWYNGPTLLDVLETVEVINLNEQQPARFPVQYVNRPNLDFRGYAGTVAAGVLRVGQAVKVLPSGVTSTISRIVTFDGDLTEAWAGEAVTLVLKDEVDISRGDLLVDAGETLTEVQNAQVDVVWMTEQPLVAGQSFDIKIAGKKTRARVDNIQYQVDINTLTQRVADSLPLNGIGLVELAFDEPMILDKYADNPTTGGMIFIDRLSNVTVGAGMVRQPLQDVYREPGAYGEFELALNALVRRHFPHWGARDLLGGK.

The region spanning 25 to 240 (KSLLRFLTCG…VLETVEVINL (216 aa)) is the tr-type G domain. Positions 34–41 (GSVDDGKS) are G1. 34–41 (GSVDDGKS) provides a ligand contact to GTP. The interval 92-96 (GITID) is G2. The segment at 113–116 (DTPG) is G3. Residues 113–117 (DTPGH) and 168–171 (NKMD) each bind GTP. A G4 region spans residues 168-171 (NKMD). Residues 206 to 208 (SAL) form a G5 region.

This sequence belongs to the TRAFAC class translation factor GTPase superfamily. Classic translation factor GTPase family. CysN/NodQ subfamily. As to quaternary structure, heterodimer composed of CysD, the smaller subunit, and CysN.

It carries out the reaction sulfate + ATP + H(+) = adenosine 5'-phosphosulfate + diphosphate. It functions in the pathway sulfur metabolism; hydrogen sulfide biosynthesis; sulfite from sulfate: step 1/3. Its function is as follows. With CysD forms the ATP sulfurylase (ATPS) that catalyzes the adenylation of sulfate producing adenosine 5'-phosphosulfate (APS) and diphosphate, the first enzymatic step in sulfur assimilation pathway. APS synthesis involves the formation of a high-energy phosphoric-sulfuric acid anhydride bond driven by GTP hydrolysis by CysN coupled to ATP hydrolysis by CysD. This Sodalis glossinidius (strain morsitans) protein is Sulfate adenylyltransferase subunit 1.